Consider the following 471-residue polypeptide: ATP synthase subunit beta (471 aa).

153-160 (GGAGVGKT) is a binding site for ATP.

This sequence belongs to the ATPase alpha/beta chains family. As to quaternary structure, F-type ATPases have 2 components, CF(1) - the catalytic core - and CF(0) - the membrane proton channel. CF(1) has five subunits: alpha(3), beta(3), gamma(1), delta(1), epsilon(1). CF(0) has four main subunits: a(1), b(1), b'(1) and c(9-12).

The protein resides in the cell inner membrane. The catalysed reaction is ATP + H2O + 4 H(+)(in) = ADP + phosphate + 5 H(+)(out). Produces ATP from ADP in the presence of a proton gradient across the membrane. The catalytic sites are hosted primarily by the beta subunits. This chain is ATP synthase subunit beta, found in Methylibium petroleiphilum (strain ATCC BAA-1232 / LMG 22953 / PM1).